We begin with the raw amino-acid sequence, 657 residues long: Oleate activated transcription factor 3 (657 aa).

Positions 21 to 48 form a DNA-binding region, zn(2)-C6 fungal-type; that stretch reads CLNCRRRKTKCDRGKPSCSNCLKLGETC.

The protein belongs to the OAF3 family.

The protein localises to the cytoplasm. Its subcellular location is the nucleus. It is found in the mitochondrion. In terms of biological role, transcriptional inhibitor with a significantly increased number of target genes in response to oleate. The protein is Oleate activated transcription factor 3 (OAF3) of Kluyveromyces lactis (strain ATCC 8585 / CBS 2359 / DSM 70799 / NBRC 1267 / NRRL Y-1140 / WM37) (Yeast).